A 250-amino-acid polypeptide reads, in one-letter code: Proteasome subunit alpha type-4 (250 aa).

Belongs to the peptidase T1A family. As to quaternary structure, the 26S proteasome consists of a 20S proteasome core and two 19S regulatory subunits. The 20S proteasome core is composed of 28 subunits that are arranged in four stacked rings, resulting in a barrel-shaped structure. The two end rings are each formed by seven alpha subunits, and the two central rings are each formed by seven beta subunits. The catalytic chamber with the active sites is on the inside of the barrel.

It is found in the cytoplasm. The protein resides in the nucleus. The proteasome is a multicatalytic proteinase complex which is characterized by its ability to cleave peptides with Arg, Phe, Tyr, Leu, and Glu adjacent to the leaving group at neutral or slightly basic pH. The proteasome has an ATP-dependent proteolytic activity. The chain is Proteasome subunit alpha type-4 (PAC1) from Spinacia oleracea (Spinach).